The chain runs to 147 residues: uncharacterized protein (147 aa).

Residues 30–102 (GRCEQVALSS…TPPTRPESIF (73 aa)) form a disordered region. Over residues 62-71 (RPSTGETFVQ) the composition is skewed to polar residues.

This is an uncharacterized protein from Homo sapiens (Human).